The chain runs to 381 residues: KRR1 small subunit processome component homolog (381 aa).

The interval 1–51 (MASPSLERPEKGAGKSEFRNQKPKPENQDESELLTVPDGWKEPAFSKEDNP) is disordered. Ala-2 carries the N-acetylalanine modification. Residues Ser-3 and Ser-5 each carry the phosphoserine modification. Basic and acidic residues-rich tracts occupy residues 7–27 (ERPE…KPEN) and 39–51 (GWKE…EDNP). Lys-24 is covalently cross-linked (Glycyl lysine isopeptide (Lys-Gly) (interchain with G-Cter in SUMO2)). The 53-residue stretch at 154 to 206 (KERFVKRRQRLIGPKGSTLKALELLTNCYIMVQGNTVSAIGPFSGLKEVRKVV) folds into the KH domain. Residues 250 to 262 (NVNKRKEPKKKTV) show a composition bias toward basic residues. Disordered regions lie at residues 250-278 (NVNK…ESQI) and 309-338 (AISK…ASTE). Glycyl lysine isopeptide (Lys-Gly) (interchain with G-Cter in SUMO2) cross-links involve residues Lys-340 and Lys-369.

It belongs to the KRR1 family. As to quaternary structure, part of the small subunit (SSU) processome, composed of more than 70 proteins and the RNA chaperone small nucleolar RNA (snoRNA) U3. In terms of assembly, (Microbial infection) Directly interacts with HIV-1 protein VPR. Also identified in a complex with NR3C1 and HIV-1 protein VPR.

Its subcellular location is the nucleus. It localises to the nucleolus. The protein localises to the cytoplasm. Functionally, part of the small subunit (SSU) processome, first precursor of the small eukaryotic ribosomal subunit. During the assembly of the SSU processome in the nucleolus, many ribosome biogenesis factors, an RNA chaperone and ribosomal proteins associate with the nascent pre-rRNA and work in concert to generate RNA folding, modifications, rearrangements and cleavage as well as targeted degradation of pre-ribosomal RNA by the RNA exosome. The chain is KRR1 small subunit processome component homolog from Homo sapiens (Human).